The primary structure comprises 433 residues: GTPase Obg (433 aa).

The region spanning 4–162 is the Obg domain; sequence EDFVDRVTIF…RWLELELKLL (159 aa). The 172-residue stretch at 163-334 folds into the OBG-type G domain; sequence ADAGLIGFPN…LKQKIFEIVG (172 aa). GTP is bound by residues 169–176, 194–198, 216–219, 286–289, and 315–317; these read GFPNVGKS, FTTLV, DIPG, NKID, and SAL. 2 residues coordinate Mg(2+): Ser176 and Thr196. The 78-residue stretch at 356–433 folds into the OCT domain; the sequence is TKIEERFDFE…IGQYSFEYKE (78 aa).

The protein belongs to the TRAFAC class OBG-HflX-like GTPase superfamily. OBG GTPase family. In terms of assembly, monomer. Mg(2+) is required as a cofactor.

The protein localises to the cytoplasm. Its function is as follows. An essential GTPase which binds GTP, GDP and possibly (p)ppGpp with moderate affinity, with high nucleotide exchange rates and a fairly low GTP hydrolysis rate. Plays a role in control of the cell cycle, stress response, ribosome biogenesis and in those bacteria that undergo differentiation, in morphogenesis control. In Pseudothermotoga lettingae (strain ATCC BAA-301 / DSM 14385 / NBRC 107922 / TMO) (Thermotoga lettingae), this protein is GTPase Obg.